A 70-amino-acid chain; its full sequence is ATP synthase subunit epsilon, mitochondrial (70 aa).

This sequence belongs to the eukaryotic ATPase epsilon family. As to quaternary structure, F-type ATPases have 2 components, CF(1) - the catalytic core - and CF(0) - the membrane proton channel. CF(1) has five subunits: alpha(3), beta(3), gamma(1), delta(1), epsilon(1). CF(0) has three main subunits: a, b and c.

The protein localises to the mitochondrion. Its subcellular location is the mitochondrion inner membrane. Mitochondrial membrane ATP synthase (F(1)F(0) ATP synthase or Complex V) produces ATP from ADP in the presence of a proton gradient across the membrane which is generated by electron transport complexes of the respiratory chain. F-type ATPases consist of two structural domains, F(1) - containing the extramembraneous catalytic core, and F(0) - containing the membrane proton channel, linked together by a central stalk and a peripheral stalk. During catalysis, ATP synthesis in the catalytic domain of F(1) is coupled via a rotary mechanism of the central stalk subunits to proton translocation. Part of the complex F(1) domain and of the central stalk which is part of the complex rotary element. Rotation of the central stalk against the surrounding alpha(3)beta(3) subunits leads to hydrolysis of ATP in three separate catalytic sites on the beta subunits. This is ATP synthase subunit epsilon, mitochondrial from Ipomoea batatas (Sweet potato).